The chain runs to 282 residues: Ribosomal RNA small subunit methyltransferase A (282 aa).

6 residues coordinate S-adenosyl-L-methionine: histidine 15, leucine 17, glycine 42, glutamate 64, aspartate 89, and asparagine 109.

The protein belongs to the class I-like SAM-binding methyltransferase superfamily. rRNA adenine N(6)-methyltransferase family. RsmA subfamily.

It localises to the cytoplasm. The catalysed reaction is adenosine(1518)/adenosine(1519) in 16S rRNA + 4 S-adenosyl-L-methionine = N(6)-dimethyladenosine(1518)/N(6)-dimethyladenosine(1519) in 16S rRNA + 4 S-adenosyl-L-homocysteine + 4 H(+). Its function is as follows. Specifically dimethylates two adjacent adenosines (A1518 and A1519) in the loop of a conserved hairpin near the 3'-end of 16S rRNA in the 30S particle. May play a critical role in biogenesis of 30S subunits. The chain is Ribosomal RNA small subunit methyltransferase A from Prochlorococcus marinus (strain MIT 9211).